We begin with the raw amino-acid sequence, 753 residues long: ATPase family gene 2 protein homolog B (753 aa).

Methionine 1 carries the post-translational modification N-acetylmethionine. Residues 1–189 (MAPDSDPFPE…PRTRVSLGGE (189 aa)) are required for interaction with AFG2A and CINP. A disordered region spans residues 171 to 203 (SPDPAGLVTPRTRVSLGGEPPSEAQPQPEVPLG). ATP is bound by residues 241 to 248 (GPPGVGKT) and 505 to 512 (GPPGCAKT).

It belongs to the AAA ATPase family. AFG2 subfamily. In terms of assembly, part of the 55LCC heterohexameric ATPase complex composed at least of AIRIM, AFG2A, AFG2B and CINP. Associates with pre-60S ribosomal particles. In terms of tissue distribution, expressed in both neurons and glia during embryonic and adult stages of brain development.

It localises to the cytoplasm. The protein resides in the cytoskeleton. The protein localises to the spindle. Its subcellular location is the nucleus. The enzyme catalyses ATP + H2O = ADP + phosphate + H(+). Its activity is regulated as follows. In the context of 55LCC heterohexameric ATPase complex, the ATPase activity is stimulated by DNA binding and inhibited in presence of RNA. Its function is as follows. ATP-dependent chaperone part of the 55LCC heterohexameric ATPase complex which is chromatin-associated and promotes replisome proteostasis to maintain replication fork progression and genome stability. Required for replication fork progression, sister chromatid cohesion, and chromosome stability. The ATPase activity is specifically enhanced by replication fork DNA and is coupled to cysteine protease-dependent cleavage of replisome substrates in response to replication fork damage. Uses ATPase activity to process replisome substrates in S-phase, facilitating their proteolytic turnover from chromatin to ensure DNA replication and mitotic fidelity. Plays an essential role in the cytoplasmic maturation steps of pre-60S ribosomal particles by promoting the release of shuttling protein RSL24D1/RLP24 from the pre-ribosomal particles. This chain is ATPase family gene 2 protein homolog B, found in Homo sapiens (Human).